The primary structure comprises 623 residues: Chaperone protein HtpG (623 aa).

Residues 1–341 form an a; substrate-binding region; that stretch reads MEKREFKAES…SQDLSLNISR (341 aa). A b region spans residues 342-549; the sequence is EMLQHDRQLS…EGEVSIEMEK (208 aa). A c region spans residues 550-623; the sequence is ILSAMPNNQG…FTNDICKLMK (74 aa).

Belongs to the heat shock protein 90 family. As to quaternary structure, homodimer.

The protein resides in the cytoplasm. Molecular chaperone. Has ATPase activity. This Clostridium perfringens (strain ATCC 13124 / DSM 756 / JCM 1290 / NCIMB 6125 / NCTC 8237 / Type A) protein is Chaperone protein HtpG.